The following is a 322-amino-acid chain: Adenine deaminase (322 aa).

Histidine 11, histidine 13, and histidine 189 together coordinate Zn(2+). Glutamate 192 functions as the Proton donor in the catalytic mechanism. Aspartate 270 contributes to the Zn(2+) binding site. Position 271 (aspartate 271) interacts with substrate.

This sequence belongs to the metallo-dependent hydrolases superfamily. Adenosine and AMP deaminases family. Adenine deaminase type 2 subfamily. It depends on Zn(2+) as a cofactor.

It carries out the reaction adenine + H2O + H(+) = hypoxanthine + NH4(+). Catalyzes the hydrolytic deamination of adenine to hypoxanthine. Plays an important role in the purine salvage pathway and in nitrogen catabolism. This is Adenine deaminase from Rhizobium johnstonii (strain DSM 114642 / LMG 32736 / 3841) (Rhizobium leguminosarum bv. viciae).